The chain runs to 289 residues: BTB/POZ domain-containing protein KCTD7 (289 aa).

Residues 1–35 are disordered; that stretch reads MVVVTGREPDSRRQDGAMSSSDAEDDFLEPATPTA. The region spanning 51 to 149 is the BTB domain; the sequence is EVVPLNIGGA…QLENMQPLKG (99 aa).

Interacts with CUL3.

It is found in the cell membrane. The protein localises to the cytoplasm. The protein resides in the cytosol. Functionally, may be involved in the control of excitability of cortical neurons. This is BTB/POZ domain-containing protein KCTD7 (KCTD7) from Homo sapiens (Human).